The primary structure comprises 274 residues: Uridine-5'-phosphate dioxygenase (274 aa).

Residues H103, D105, and H246 each coordinate Fe cation.

Fe(2+) serves as cofactor.

It catalyses the reaction UMP + 2-oxoglutarate + O2 = uridine-5'-aldehyde + succinate + phosphate + CO2. The protein operates within antibiotic biosynthesis. Its activity is regulated as follows. Inhibited by several divalent cations, including Zn(2+). Functionally, dioxygenase involved in the biosynthesis of the lipopeptidyl nucleoside antibiotic A-90289. Catalyzes the dephosphorylation and oxidation of UMP to generate uridine-5'-aldehyde, the first intermediate in the biosynthesis of A-90289. The protein is Uridine-5'-phosphate dioxygenase of Streptomyces sp.